A 449-amino-acid polypeptide reads, in one-letter code: tRNA modification GTPase MnmE (449 aa).

(6S)-5-formyl-5,6,7,8-tetrahydrofolate-binding residues include arginine 24, glutamate 81, and lysine 121. One can recognise a TrmE-type G domain in the interval 218–375 (GLVVAITGPP…LIAALGKFAA (158 aa)). Residues 228-233 (NVGKST), 247-253 (SPHAGTT), and 272-275 (DTAG) each bind GTP. Positions 232 and 253 each coordinate Mg(2+). Residue lysine 449 coordinates (6S)-5-formyl-5,6,7,8-tetrahydrofolate.

It belongs to the TRAFAC class TrmE-Era-EngA-EngB-Septin-like GTPase superfamily. TrmE GTPase family. In terms of assembly, homodimer. Heterotetramer of two MnmE and two MnmG subunits. The cofactor is K(+).

It is found in the cytoplasm. Functionally, exhibits a very high intrinsic GTPase hydrolysis rate. Involved in the addition of a carboxymethylaminomethyl (cmnm) group at the wobble position (U34) of certain tRNAs, forming tRNA-cmnm(5)s(2)U34. This chain is tRNA modification GTPase MnmE, found in Rhodopseudomonas palustris (strain BisB18).